The chain runs to 1070 residues: Probable arabinosyltransferase C (1070 aa).

A run of 12 helical transmembrane segments spans residues 10-32 (IARL…TPFL), 210-232 (LLKT…ALHL), 247-269 (SRWW…WHFV), 399-421 (VATS…LFSG), 425-442 (IASI…LTIL), 449-471 (FGAV…LIFR), 512-534 (SVAR…AMSL), 547-564 (SRRI…MMFT), 574-596 (VFAG…AALR), 603-625 (VFAA…WWYV), 645-664 (TALL…FHFV), and 685-707 (SPIA…MAMI).

It belongs to the emb family.

The protein resides in the cell membrane. Its function is as follows. Arabinosyl transferase responsible for the polymerization of arabinose into the arabinan of arabinogalactan. In Mycobacterium leprae (strain TN), this protein is Probable arabinosyltransferase C (embC).